Consider the following 160-residue polypeptide: MMSVSVCPCGSGNLLDACCGHYHAGTPAPDAQALMRSRYSAYVLGLVDYLVATTLPAQQAGLDRAAMADWSAQSTWLGLEVESAEVLGGQPEHSFVTFTARWHDQDGDHQHRERSAFVQHAGRWYFIDPTVGLKAGRNDPCPCASGHKFKKCCNNYLPKG.

Belongs to the UPF0225 family.

The polypeptide is UPF0225 protein PP_1119 (Pseudomonas putida (strain ATCC 47054 / DSM 6125 / CFBP 8728 / NCIMB 11950 / KT2440)).